Reading from the N-terminus, the 72-residue chain is DNA-directed RNA polymerase subunit omega (72 aa).

This sequence belongs to the RNA polymerase subunit omega family. In terms of assembly, the RNAP catalytic core consists of 2 alpha, 1 beta, 1 beta' and 1 omega subunit. When a sigma factor is associated with the core the holoenzyme is formed, which can initiate transcription.

It carries out the reaction RNA(n) + a ribonucleoside 5'-triphosphate = RNA(n+1) + diphosphate. Its function is as follows. Promotes RNA polymerase assembly. Latches the N- and C-terminal regions of the beta' subunit thereby facilitating its interaction with the beta and alpha subunits. In Clostridium beijerinckii (strain ATCC 51743 / NCIMB 8052) (Clostridium acetobutylicum), this protein is DNA-directed RNA polymerase subunit omega.